We begin with the raw amino-acid sequence, 429 residues long: Zinc-regulated GTPase metalloprotein activator 1 (429 aa).

A psi-PxLVp motif motif is present at residues 15-22 (GELPCLVT). GTP is bound at residue 78–85 (GYLGSGKS). Zn(2+) contacts are provided by C136, C138, and C139. The CXCC motif signature appears at 136–139 (CLCC). Residues 139-143 (CSLKN) and 244-247 (NKYD) each bind GTP. The CobW C-terminal domain maps to 362–428 (RDWEVQRTKG…SIEELLRKTL (67 aa)).

This sequence belongs to the SIMIBI class G3E GTPase family. ZNG1 subfamily.

The catalysed reaction is GTP + H2O = GDP + phosphate + H(+). Its function is as follows. Zinc chaperone that directly transfers zinc cofactor to target metalloproteins, thereby activating them. Catalyzes zinc insertion into the active site of methionine aminopeptidase MAP1, which function to cleave the initiator methionine from polypeptides during or after protein translation. Mechanistically, the N-terminal psi-PxLVp motif binds to the C6H2-type zinc finger of inactive form of MAP1. After formation of the docked complex, zinc is transferred from the CXCC motif in the GTPase domain of ZNG1 to the zinc binding site in the peptidase domain of MAP1 in a process requiring GTP hydrolysis. GTP/GDP exchange is required for release of active MAP1. The sequence is that of Zinc-regulated GTPase metalloprotein activator 1 from Saccharomyces cerevisiae (strain ATCC 204508 / S288c) (Baker's yeast).